The following is a 92-amino-acid chain: Co-chaperonin GroES (92 aa).

Belongs to the GroES chaperonin family. Heptamer of 7 subunits arranged in a ring. Interacts with the chaperonin GroEL.

It localises to the cytoplasm. Together with the chaperonin GroEL, plays an essential role in assisting protein folding. The GroEL-GroES system forms a nano-cage that allows encapsulation of the non-native substrate proteins and provides a physical environment optimized to promote and accelerate protein folding. GroES binds to the apical surface of the GroEL ring, thereby capping the opening of the GroEL channel. This is Co-chaperonin GroES from Thermotoga neapolitana.